A 426-amino-acid polypeptide reads, in one-letter code: 3-phosphoshikimate 1-carboxyvinyltransferase (426 aa).

The 3-phosphoshikimate site is built by K22, S23, and R27. K22 provides a ligand contact to phosphoenolpyruvate. Residues G96 and R124 each contribute to the phosphoenolpyruvate site. Positions 170, 171, 172, 198, 314, 337, and 341 each coordinate 3-phosphoshikimate. Position 172 (Q172) interacts with phosphoenolpyruvate. The active-site Proton acceptor is D314. The phosphoenolpyruvate site is built by R345, R387, and K412.

The protein belongs to the EPSP synthase family. Monomer.

Its subcellular location is the cytoplasm. It catalyses the reaction 3-phosphoshikimate + phosphoenolpyruvate = 5-O-(1-carboxyvinyl)-3-phosphoshikimate + phosphate. It participates in metabolic intermediate biosynthesis; chorismate biosynthesis; chorismate from D-erythrose 4-phosphate and phosphoenolpyruvate: step 6/7. Catalyzes the transfer of the enolpyruvyl moiety of phosphoenolpyruvate (PEP) to the 5-hydroxyl of shikimate-3-phosphate (S3P) to produce enolpyruvyl shikimate-3-phosphate and inorganic phosphate. This is 3-phosphoshikimate 1-carboxyvinyltransferase from Colwellia psychrerythraea (strain 34H / ATCC BAA-681) (Vibrio psychroerythus).